We begin with the raw amino-acid sequence, 206 residues long: Large ribosomal subunit protein bL25 (206 aa).

The tract at residues 168-206 (DPEESVVTVEVPEDASESTAAPEAAAPAADAAAPAADAK) is disordered. Low complexity predominate over residues 184-206 (ESTAAPEAAAPAADAAAPAADAK).

This sequence belongs to the bacterial ribosomal protein bL25 family. CTC subfamily. Part of the 50S ribosomal subunit; part of the 5S rRNA/L5/L18/L25 subcomplex. Contacts the 5S rRNA. Binds to the 5S rRNA independently of L5 and L18.

Its function is as follows. This is one of the proteins that binds to the 5S RNA in the ribosome where it forms part of the central protuberance. The sequence is that of Large ribosomal subunit protein bL25 from Bifidobacterium longum (strain DJO10A).